A 134-amino-acid chain; its full sequence is Putative pre-16S rRNA nuclease (134 aa).

It belongs to the YqgF nuclease family.

It localises to the cytoplasm. Could be a nuclease involved in processing of the 5'-end of pre-16S rRNA. This is Putative pre-16S rRNA nuclease from Helicobacter pylori (strain G27).